Here is a 429-residue protein sequence, read N- to C-terminus: Trigger factor (429 aa).

Positions 162 to 247 (DDTVDLAFEG…INAIKKLRQP (86 aa)) constitute a PPIase FKBP-type domain.

The protein belongs to the FKBP-type PPIase family. Tig subfamily.

Its subcellular location is the cytoplasm. The enzyme catalyses [protein]-peptidylproline (omega=180) = [protein]-peptidylproline (omega=0). Involved in protein export. Acts as a chaperone by maintaining the newly synthesized protein in an open conformation. Functions as a peptidyl-prolyl cis-trans isomerase. The chain is Trigger factor from Fusobacterium nucleatum subsp. nucleatum (strain ATCC 25586 / DSM 15643 / BCRC 10681 / CIP 101130 / JCM 8532 / KCTC 2640 / LMG 13131 / VPI 4355).